The following is a 401-amino-acid chain: Transcription factor atf-2 (401 aa).

Residues 19-38 (SASAEFSSSSSDSSNFSEGS) show a composition bias toward low complexity. The interval 19-78 (SASAEFSSSSSDSSNFSEGSPPESRRNSVNESVIKDEHYWERRRRNNDASRRSREKRRQN) is disordered. The segment covering 41-78 (ESRRNSVNESVIKDEHYWERRRRNNDASRRSREKRRQN) has biased composition (basic and acidic residues). One can recognise a bZIP 1 domain in the interval 54–100 (DEHYWERRRRNNDASRRSREKRRQNDLAMEEKIMLLSAENERLKSQL). A basic motif 1 region spans residues 60–85 (RRRRNNDASRRSREKRRQNDLAMEEK). The segment at 89–96 (LSAENERL) is leucine-zipper 1. The segment covering 181–211 (SASSLFSSSSSSAFHPFRPSESAQQSFPSSS) has biased composition (low complexity). Disordered regions lie at residues 181–256 (SASS…PQPV) and 273–345 (QRRP…AAKR). Composition is skewed to polar residues over residues 222 to 256 (DSST…PQPV) and 273 to 283 (QRRPSPTVPQS). Over residues 305 to 317 (ESVSSSASFSPSH) the composition is skewed to low complexity. A bZIP 2 domain is found at 329–392 (SPQYVDRRRR…AHFKSVLAQR (64 aa)). Positions 335 to 360 (RRRRNNEAAKRCRANRRAVFEYRSRR) are basic motif 2. Positions 361 to 388 (VQLLEGENEDLRTQIETLKAEIAHFKSV) form a coiled coil. The tract at residues 364–378 (LEGENEDLRTQIETL) is leucine-zipper 2.

Belongs to the bZIP family. As to quaternary structure, interacts with cell death specification protein ces-2. Post-translationally, phosphorylated by mitogen-activated protein kinases pmk-2 and pmk-3. May be responsive to osmotic stress.

The protein localises to the nucleus. Acts as a transcription factor that recognizes and binds to the sequence 5'-[GA]TTA[CT]GTAA[CT]-3', a sequence present in many promoters. Involved in the development of the excretory duct cell, by positively modulating embryonic transcription of putative transcription factor lin-48, acting in concert with cell death specification protein ces-2. Negatively modulates expression of key autophagy-related genes, bec-1/ATG6 and lgg-1/ATG8, and may link together autophagy and apoptosis during development. Positively modulates expression of neuropeptide pigment dispersing factor homologs pdf-1 and pdf-2. The chain is Transcription factor atf-2 from Caenorhabditis elegans.